The chain runs to 236 residues: MVCDTLVYHPSVTRFVKFLDGSAGREKVLRLLQYLARFLAVQNSSLLARQLQAQFTTVRKFLRFLKPLNHLQAAAKFYDNKLASDNVVRVCNVLKNIFFAAYLSLDQVNLLRILKVIPVTVLTGKKIPRWSNWCWLFGLLSGLAMDLRKIQTSHAQIAAFVKAKSQSQGDEHEDHKKVLGKAYQDRYTALRRLFWDAADSFIVLNNLGYLSSNEEYVALSGVVTSILGMQDMWKAT.

This sequence belongs to the peroxin-11 family. Homooligomer. Interacts with PEX34.

It is found in the peroxisome membrane. Involved in peroxisomal proliferation. Promotes peroxisome division and biogenesis. The polypeptide is Peroxisomal membrane protein PMP27 (PEX11) (Saccharomyces cerevisiae (strain ATCC 204508 / S288c) (Baker's yeast)).